The sequence spans 274 residues: tRNA-cytidine(32) 2-sulfurtransferase (274 aa).

The PP-loop motif signature appears at 40–45 (SGGKDS). [4Fe-4S] cluster-binding residues include Cys115, Cys118, and Cys206.

It belongs to the TtcA family. As to quaternary structure, homodimer. Requires Mg(2+) as cofactor. It depends on [4Fe-4S] cluster as a cofactor.

It localises to the cytoplasm. The enzyme catalyses cytidine(32) in tRNA + S-sulfanyl-L-cysteinyl-[cysteine desulfurase] + AH2 + ATP = 2-thiocytidine(32) in tRNA + L-cysteinyl-[cysteine desulfurase] + A + AMP + diphosphate + H(+). The protein operates within tRNA modification. Functionally, catalyzes the ATP-dependent 2-thiolation of cytidine in position 32 of tRNA, to form 2-thiocytidine (s(2)C32). The sulfur atoms are provided by the cysteine/cysteine desulfurase (IscS) system. This Pseudomonas putida (strain ATCC 47054 / DSM 6125 / CFBP 8728 / NCIMB 11950 / KT2440) protein is tRNA-cytidine(32) 2-sulfurtransferase.